The sequence spans 277 residues: MKRKPAVAGLFYPSRRDELIEQIRMCFLDKRIGPGKLPGPVETKLQNPIGLVSPHAGYIYSGPVAAWGFLEAVKFGEPSVVVIIGPNHTGLGRPVGVWPEGEWETPLGTVPVNERAVEIVLSNSRYAEEDFMSHIREHSIEVQIPFLQFVFGEVSIVPICLMDQSPAVAEDLASALAKLVAEFPGVLIIASTDLNHYEDQRTTLRKDSYIIEAIEGMDPSLLYEYLVREDISMCGYGGVATLLNMDFENVRILKHATSGDVSGDTLEVVGYLSAILF.

The protein belongs to the MEMO1 family.

This Thermotoga maritima (strain ATCC 43589 / DSM 3109 / JCM 10099 / NBRC 100826 / MSB8) protein is MEMO1 family protein TM_0087.